The sequence spans 146 residues: Large ribosomal subunit protein uL15 (146 aa).

The disordered stretch occupies residues 1-54 (MTIKLHDLRPAPGSKTPRTRVGRGEGSKGKTAGRGTKGTKARKQVPTTFEGGQM).

It belongs to the universal ribosomal protein uL15 family. Part of the 50S ribosomal subunit.

Its function is as follows. Binds to the 23S rRNA. This chain is Large ribosomal subunit protein uL15, found in Mycobacterium ulcerans (strain Agy99).